The primary structure comprises 152 residues: Ubiquitin-activating enzyme E1 Y (152 aa).

The active-site Glycyl thioester intermediate is the Cys51.

The protein belongs to the ubiquitin-activating E1 family. In terms of assembly, monomer.

The enzyme catalyses ATP + ubiquitin + [E1 ubiquitin-activating enzyme]-L-cysteine = AMP + diphosphate + S-ubiquitinyl-[E1 ubiquitin-activating enzyme]-L-cysteine.. Its pathway is protein modification; protein ubiquitination. Its function is as follows. Activates ubiquitin by first adenylating its C-terminal glycine residue with ATP, and thereafter linking this residue to the side chain of a cysteine residue in E1, yielding a ubiquitin-E1 thioester and free AMP. The Y chromosome form could be involved in the survival and proliferation of differentiating spermatogonia. This chain is Ubiquitin-activating enzyme E1 Y (UBE1Y), found in Osphranter rufus (Red kangaroo).